The following is a 304-amino-acid chain: Porphobilinogen deaminase (304 aa).

S-(dipyrrolylmethanemethyl)cysteine is present on cysteine 240.

This sequence belongs to the HMBS family. As to quaternary structure, monomer. Dipyrromethane is required as a cofactor.

It carries out the reaction 4 porphobilinogen + H2O = hydroxymethylbilane + 4 NH4(+). It functions in the pathway porphyrin-containing compound metabolism; protoporphyrin-IX biosynthesis; coproporphyrinogen-III from 5-aminolevulinate: step 2/4. Tetrapolymerization of the monopyrrole PBG into the hydroxymethylbilane pre-uroporphyrinogen in several discrete steps. The sequence is that of Porphobilinogen deaminase from Xanthomonas axonopodis pv. citri (strain 306).